The chain runs to 334 residues: N-acetyl-gamma-glutamyl-phosphate reductase (334 aa).

Residue Cys-154 is part of the active site.

Belongs to the NAGSA dehydrogenase family. Type 1 subfamily.

It localises to the cytoplasm. It catalyses the reaction N-acetyl-L-glutamate 5-semialdehyde + phosphate + NADP(+) = N-acetyl-L-glutamyl 5-phosphate + NADPH + H(+). The protein operates within amino-acid biosynthesis; L-arginine biosynthesis; N(2)-acetyl-L-ornithine from L-glutamate: step 3/4. Its function is as follows. Catalyzes the NADPH-dependent reduction of N-acetyl-5-glutamyl phosphate to yield N-acetyl-L-glutamate 5-semialdehyde. The polypeptide is N-acetyl-gamma-glutamyl-phosphate reductase (Yersinia pestis).